Reading from the N-terminus, the 111-residue chain is SIAFSRAVFSEFLATLLFVFFGLGSALNWPSTVPIPTVLQISMAFGLAIGTLVQTLGHISGAHINPAVTVACLVGCHVSFLRATFYVAAQLLGAVAGAALLHKLTPEDIRG.

At 1 to 6 the chain is on the cytoplasmic side; the sequence is SIAFSR. Residues 7–27 traverse the membrane as a helical segment; sequence AVFSEFLATLLFVFFGLGSAL. The Extracellular portion of the chain corresponds to 28 to 37; sequence NWPSTVPIPT. Residues 38–56 traverse the membrane as a helical segment; sequence VLQISMAFGLAIGTLVQTL. Residues 57-61 are Cytoplasmic-facing; the sequence is GHISG. Residues 62 to 71 constitute an intramembrane region (discontinuously helical); that stretch reads AHINPAVTVA. Positions 65–67 match the NPA 1 motif; the sequence is NPA. Topologically, residues 72-82 are cytoplasmic; sequence CLVGCHVSFLR. Residues 83-104 traverse the membrane as a helical segment; that stretch reads ATFYVAAQLLGAVAGAALLHKL. Over 105-111 the chain is Extracellular; sequence TPEDIRG.

Belongs to the MIP/aquaporin (TC 1.A.8) family. In terms of assembly, homotetramer. Serine phosphorylation is necessary and sufficient for expression at the apical membrane. Endocytosis is not phosphorylation-dependent. In terms of processing, N-glycosylated.

Its subcellular location is the apical cell membrane. It is found in the basolateral cell membrane. The protein localises to the cell membrane. It localises to the cytoplasmic vesicle membrane. The protein resides in the golgi apparatus. Its subcellular location is the trans-Golgi network membrane. It catalyses the reaction H2O(in) = H2O(out). It carries out the reaction glycerol(in) = glycerol(out). In terms of biological role, forms a water-specific channel that provides the plasma membranes of renal collecting duct with high permeability to water, thereby permitting water to move in the direction of an osmotic gradient. Plays an essential role in renal water homeostasis. Could also be permeable to glycerol. This Macroscelides proboscideus (Short-eared elephant shrew) protein is Aquaporin-2.